The chain runs to 112 residues: Signal recognition particle 19 kDa protein (112 aa).

Belongs to the SRP19 family. As to quaternary structure, part of the signal recognition particle protein translocation system, which is composed of SRP and FtsY. Archaeal SRP consists of a 7S RNA molecule of 300 nucleotides and two protein subunits: SRP54 and SRP19.

It localises to the cytoplasm. In terms of biological role, involved in targeting and insertion of nascent membrane proteins into the cytoplasmic membrane. Binds directly to 7S RNA and mediates binding of the 54 kDa subunit of the SRP. This chain is Signal recognition particle 19 kDa protein, found in Aeropyrum pernix (strain ATCC 700893 / DSM 11879 / JCM 9820 / NBRC 100138 / K1).